The primary structure comprises 718 residues: Peroxisomal bifunctional enzyme (718 aa).

Residues 2–280 form an enoyl-CoA hydratase / isomerase region; the sequence is ARYELVKRSV…FAQRTAEKWT (279 aa). Substrate is bound at residue Gly-100. A 3-hydroxyacyl-CoA dehydrogenase region spans residues 281 to 567; sequence LPSGAQWNNS…DMVCQQGRFG (287 aa). A Microbody targeting signal motif is present at residues 716–718; it reads SHL.

In the N-terminal section; belongs to the enoyl-CoA hydratase/isomerase family. The protein in the C-terminal section; belongs to the 3-hydroxyacyl-CoA dehydrogenase family. In terms of assembly, monomer.

Its subcellular location is the peroxisome. It catalyses the reaction a (3S)-3-hydroxyacyl-CoA = a (2E)-enoyl-CoA + H2O. The catalysed reaction is a 4-saturated-(3S)-3-hydroxyacyl-CoA = a (3E)-enoyl-CoA + H2O. The enzyme catalyses a (3Z)-enoyl-CoA = a 4-saturated (2E)-enoyl-CoA. It carries out the reaction a (3E)-enoyl-CoA = a 4-saturated (2E)-enoyl-CoA. It catalyses the reaction a (3S)-3-hydroxyacyl-CoA + NAD(+) = a 3-oxoacyl-CoA + NADH + H(+). The catalysed reaction is (2S,3S)-3-hydroxy-2-methylbutanoyl-CoA = (2E)-2-methylbut-2-enoyl-CoA + H2O. The enzyme catalyses (3S)-hydroxyhexadecanoyl-CoA + NAD(+) = 3-oxohexadecanoyl-CoA + NADH + H(+). It carries out the reaction (3S)-hydroxyhexadecanoyl-CoA = (2E)-hexadecenoyl-CoA + H2O. It catalyses the reaction (2E)-hexadecenedioyl-CoA + H2O = (3S)-hydroxyhexadecanedioyl-CoA. The catalysed reaction is (3S)-hydroxyhexadecanedioyl-CoA + NAD(+) = 3-oxohexadecanedioyl-CoA + NADH + H(+). The enzyme catalyses (3E,5Z)-tetradecadienoyl-CoA = (2E,5Z)-tetradecadienoyl-CoA. It carries out the reaction (3E,5Z)-octadienoyl-CoA = (2E,5Z)-octadienoyl-CoA. It catalyses the reaction (3S)-hydroxydecanoyl-CoA + NAD(+) = 3-oxodecanoyl-CoA + NADH + H(+). The catalysed reaction is (3E)-decenoyl-CoA = (2E)-decenoyl-CoA. The enzyme catalyses (3Z)-hexenoyl-CoA = (2E)-hexenoyl-CoA. It carries out the reaction (3E)-hexenoyl-CoA = (2E)-hexenoyl-CoA. It catalyses the reaction (3S)-hydroxydecanoyl-CoA = (2E)-decenoyl-CoA + H2O. The catalysed reaction is (3S)-hydroxyhexanoyl-CoA = (2E)-hexenoyl-CoA + H2O. It participates in lipid metabolism; fatty acid beta-oxidation. Its function is as follows. Peroxisomal trifunctional enzyme possessing 2-enoyl-CoA hydratase, 3-hydroxyacyl-CoA dehydrogenase, and delta 3, delta 2-enoyl-CoA isomerase activities. Catalyzes two of the four reactions of the long straight chain fatty acids peroxisomal beta-oxidation pathway. Can also use branched-chain fatty acids such as 2-methyl-2E-butenoyl-CoA as a substrate, which is hydrated into (2S,3S)-3-hydroxy-2-methylbutanoyl-CoA. Optimal isomerase for 2,5 double bonds into 3,5 form isomerization in a range of enoyl-CoA species. Also able to isomerize both 3-cis and 3-trans double bonds into the 2-trans form in a range of enoyl-CoA species. Regulates the amount of medium-chain dicarboxylic fatty acids which are essential regulators of all fatty acid oxidation pathways. Also involved in the degradation of long-chain dicarboxylic acids through peroxisomal beta-oxidation. In Danio rerio (Zebrafish), this protein is Peroxisomal bifunctional enzyme (ehhadh).